The primary structure comprises 245 residues: NAD-dependent protein deacetylase (245 aa).

Residues 1–245 (MIFVQQFEEV…EFVEGLSSRK (245 aa)) enclose the Deacetylase sirtuin-type domain. Residues Ala-26, Thr-30, Phe-37, Arg-38, Gln-105, Ile-107, Asp-108, and His-123 each contribute to the NAD(+) site. Phe-37 contributes to the nicotinamide binding site. The nicotinamide site is built by Ile-107 and Asp-108. His-123 serves as the catalytic Proton acceptor. Positions 131, 134, 151, and 154 each coordinate Zn(2+). Residues Thr-190, Ser-191, Asn-216, and Ile-234 each coordinate NAD(+).

Belongs to the sirtuin family. Class U subfamily. Zn(2+) is required as a cofactor.

It localises to the cytoplasm. It catalyses the reaction N(6)-acetyl-L-lysyl-[protein] + NAD(+) + H2O = 2''-O-acetyl-ADP-D-ribose + nicotinamide + L-lysyl-[protein]. In terms of biological role, NAD-dependent protein deacetylase which modulates the activities of several enzymes which are inactive in their acetylated form. The sequence is that of NAD-dependent protein deacetylase from Bacillus cereus (strain ZK / E33L).